A 701-amino-acid chain; its full sequence is Kinesin-like protein KIN-10C (701 aa).

Residues 8–318 (VVRVVARVKP…LNLASRICLG (311 aa)) form the Kinesin motor domain. 94–101 (GARNSGKT) contacts ATP.

The protein belongs to the TRAFAC class myosin-kinesin ATPase superfamily. Kinesin family. KIN-10 subfamily.

The protein is Kinesin-like protein KIN-10C of Arabidopsis thaliana (Mouse-ear cress).